Here is a 425-residue protein sequence, read N- to C-terminus: UDP-N-acetylglucosamine 1-carboxyvinyltransferase (425 aa).

Position 31–32 (31–32 (KN)) interacts with phosphoenolpyruvate. Arginine 100 serves as a coordination point for UDP-N-acetyl-alpha-D-glucosamine. The active-site Proton donor is cysteine 124. Cysteine 124 carries the 2-(S-cysteinyl)pyruvic acid O-phosphothioketal modification. Residues 129–133 (RPIDQ), 170–172 (TVT), aspartate 311, and isoleucine 333 each bind UDP-N-acetyl-alpha-D-glucosamine.

The protein belongs to the EPSP synthase family. MurA subfamily.

It is found in the cytoplasm. It catalyses the reaction phosphoenolpyruvate + UDP-N-acetyl-alpha-D-glucosamine = UDP-N-acetyl-3-O-(1-carboxyvinyl)-alpha-D-glucosamine + phosphate. It participates in cell wall biogenesis; peptidoglycan biosynthesis. Functionally, cell wall formation. Adds enolpyruvyl to UDP-N-acetylglucosamine. The chain is UDP-N-acetylglucosamine 1-carboxyvinyltransferase from Aquifex aeolicus (strain VF5).